A 247-amino-acid chain; its full sequence is 14-3-3 protein gamma-A (247 aa).

This sequence belongs to the 14-3-3 family. As to quaternary structure, homodimer, and heterodimer with other family members.

The protein resides in the cytoplasm. In terms of biological role, adapter protein implicated in the regulation of a large spectrum of both general and specialized signaling pathways. Binds to a large number of partners, usually by recognition of a phosphoserine or phosphothreonine motif. Binding generally results in the modulation of the activity of the binding partner. The sequence is that of 14-3-3 protein gamma-A (ywhag-a) from Xenopus laevis (African clawed frog).